A 222-amino-acid chain; its full sequence is Superoxide dismutase [Mn], mitochondrial (222 aa).

The N-terminal 24 residues, 1 to 24 (MLSRAVCGTGRQLAPALGYLGSRQ), are a transit peptide targeting the mitochondrion. Position 50 (His-50) interacts with Mn(2+). Position 58 is a 3'-nitrotyrosine (Tyr-58). An N6-acetyllysine; alternate mark is found at Lys-68 and Lys-75. N6-succinyllysine; alternate is present on residues Lys-68 and Lys-75. His-98 contacts Mn(2+). Lys-114 carries the post-translational modification N6-acetyllysine. Lys-122 and Lys-130 each carry N6-acetyllysine; alternate. Residues Lys-122 and Lys-130 each carry the N6-succinyllysine; alternate modification. The Mn(2+) site is built by Asp-183 and His-187. Lys-202 is subject to N6-acetyllysine.

This sequence belongs to the iron/manganese superoxide dismutase family. In terms of assembly, homotetramer. It depends on Mn(2+) as a cofactor. Post-translationally, nitrated under oxidative stress. Nitration coupled with oxidation inhibits the catalytic activity. In terms of processing, acetylation at Lys-122 decreases enzymatic activity. Deacetylated by SIRT3 upon exposure to ionizing radiations or after long fasting. Polyubiquitinated; leading to proteasomal degradation. Deubiquitinated by USP36 which increases protein stability.

It is found in the mitochondrion matrix. The catalysed reaction is 2 superoxide + 2 H(+) = H2O2 + O2. In terms of biological role, destroys superoxide anion radicals which are normally produced within the cells and which are toxic to biological systems. This Macaca nemestrina (Pig-tailed macaque) protein is Superoxide dismutase [Mn], mitochondrial (SOD2).